A 264-amino-acid polypeptide reads, in one-letter code: Proteasome subunit beta type-4 (264 aa).

Met1 carries the post-translational modification N-acetylmethionine. A propeptide spanning residues 1 to 45 (MEAFWESRAGHWAGGPAPGQFYRIPATPSGLMDPASAPCEGPITR) is cleaved from the precursor. Tyr102 bears the Phosphotyrosine mark.

It belongs to the peptidase T1B family. In terms of assembly, the 26S proteasome consists of a 20S proteasome core and two 19S regulatory subunits. The 20S proteasome core is a barrel-shaped complex made of 28 subunits that are arranged in four stacked rings. The two outer rings are each formed by seven alpha subunits, and the two inner rings are formed by seven beta subunits. The proteolytic activity is exerted by three beta-subunits PSMB5, PSMB6 and PSMB7. Forms a ternary complex with SMAD1 and OAZ1 before PSMB4 is incorporated into the 20S proteasome. Interacts with PRPF19. Detected in liver (at protein level).

Its subcellular location is the cytoplasm. The protein localises to the nucleus. In terms of biological role, non-catalytic component of the 20S core proteasome complex involved in the proteolytic degradation of most intracellular proteins. This complex plays numerous essential roles within the cell by associating with different regulatory particles. Associated with two 19S regulatory particles, forms the 26S proteasome and thus participates in the ATP-dependent degradation of ubiquitinated proteins. The 26S proteasome plays a key role in the maintenance of protein homeostasis by removing misfolded or damaged proteins that could impair cellular functions, and by removing proteins whose functions are no longer required. Associated with the PA200 or PA28, the 20S proteasome mediates ubiquitin-independent protein degradation. This type of proteolysis is required in several pathways including spermatogenesis (20S-PA200 complex) or generation of a subset of MHC class I-presented antigenic peptides (20S-PA28 complex). SMAD1/OAZ1/PSMB4 complex mediates the degradation of the CREBBP/EP300 repressor SNIP1. The sequence is that of Proteasome subunit beta type-4 (Psmb4) from Mus musculus (Mouse).